The sequence spans 362 residues: Adenosine deaminase (362 aa).

Positions 19 and 21 each coordinate Zn(2+). Residues H21, D23, and G181 each contribute to the substrate site. H208 contacts Zn(2+). Catalysis depends on E211, which acts as the Proton donor. D300 contributes to the Zn(2+) binding site.

Belongs to the metallo-dependent hydrolases superfamily. Adenosine and AMP deaminases family. Adenosine deaminase subfamily. Zn(2+) serves as cofactor.

The enzyme catalyses adenosine + H2O + H(+) = inosine + NH4(+). It catalyses the reaction 2'-deoxyadenosine + H2O + H(+) = 2'-deoxyinosine + NH4(+). In terms of biological role, catalyzes the hydrolytic deamination of adenosine and 2-deoxyadenosine. This is Adenosine deaminase from Mycobacterium ulcerans (strain Agy99).